Here is a 396-residue protein sequence, read N- to C-terminus: Phosphoglycerate kinase (396 aa).

Residues 21–23, Arg-36, 59–62, Arg-118, and Arg-151 each bind substrate; these read DFN and HFDR. ATP contacts are provided by residues Lys-201, Glu-323, and 353-356; that span reads GGDT.

It belongs to the phosphoglycerate kinase family. Monomer.

Its subcellular location is the cytoplasm. It catalyses the reaction (2R)-3-phosphoglycerate + ATP = (2R)-3-phospho-glyceroyl phosphate + ADP. It participates in carbohydrate degradation; glycolysis; pyruvate from D-glyceraldehyde 3-phosphate: step 2/5. This chain is Phosphoglycerate kinase, found in Caulobacter vibrioides (strain ATCC 19089 / CIP 103742 / CB 15) (Caulobacter crescentus).